Consider the following 275-residue polypeptide: Protein FAM210A (275 aa).

The interval 68–108 is disordered; that stretch reads SSQPADTPRKVPEEREPLTSATEVPKQSPVESDASDPDPLQ. The span at 74 to 84 shows a compositional bias: basic and acidic residues; the sequence is TPRKVPEEREP. In terms of domain architecture, DUF1279 spans 109-221; that stretch reads DKSISLVQRF…GYMSTPPPVK (113 aa). Residues 128-148 traverse the membrane as a helical segment; sequence VMIPVHLVTSTVWFGSFYYAA. The stretch at 221 to 271 forms a coiled coil; it reads KEYLQDRMEETKDKITEKMEETKDKITEKMEETKDKITEKIQETKDKVSFK.

It belongs to the FAM210 family. In terms of assembly, interacts with ATAD3A.

The protein localises to the membrane. It is found in the mitochondrion. It localises to the cytoplasm. Its function is as follows. May play a role in the structure and strength of both muscle and bone. This is Protein FAM210A (FAM210A) from Gallus gallus (Chicken).